A 122-amino-acid polypeptide reads, in one-letter code: Ribonuclease P protein component (122 aa).

Belongs to the RnpA family. As to quaternary structure, consists of a catalytic RNA component (M1 or rnpB) and a protein subunit.

The enzyme catalyses Endonucleolytic cleavage of RNA, removing 5'-extranucleotides from tRNA precursor.. Functionally, RNaseP catalyzes the removal of the 5'-leader sequence from pre-tRNA to produce the mature 5'-terminus. It can also cleave other RNA substrates such as 4.5S RNA. The protein component plays an auxiliary but essential role in vivo by binding to the 5'-leader sequence and broadening the substrate specificity of the ribozyme. This chain is Ribonuclease P protein component, found in Lactobacillus gasseri (strain ATCC 33323 / DSM 20243 / BCRC 14619 / CIP 102991 / JCM 1131 / KCTC 3163 / NCIMB 11718 / NCTC 13722 / AM63).